A 310-amino-acid polypeptide reads, in one-letter code: Probable manganese-dependent inorganic pyrophosphatase (310 aa).

Mn(2+) contacts are provided by histidine 9, aspartate 13, aspartate 15, aspartate 76, histidine 98, and aspartate 150.

This sequence belongs to the PPase class C family. Requires Mn(2+) as cofactor.

The protein localises to the cytoplasm. It catalyses the reaction diphosphate + H2O = 2 phosphate + H(+). This chain is Probable manganese-dependent inorganic pyrophosphatase, found in Streptococcus thermophilus (strain ATCC BAA-491 / LMD-9).